We begin with the raw amino-acid sequence, 158 residues long: MTHFISIATYIYALVSAGFIGGWHDEESWIKDTEYEHGGYHMIIDTPAVVNYSLEYGNYQWIFQKYMKEGKVTVERFYRNSLDIPKEILTDEALAFIKDWDENANEYELHAGEGVLYFKYEGEEKGYVIPMAYAGEIMFVPDEDAEKALEIINSQKKY.

The protein is Putative gene 52 protein (52) of Bacillus subtilis (Bacteriophage SP01).